The following is a 74-amino-acid chain: Protein sok (74 aa).

Residues 26–45 (TQHGNKPPSRHEAESLKRRA) form a disordered region.

The sequence is that of Protein sok (sok) from Escherichia coli.